Reading from the N-terminus, the 281-residue chain is MSDRRSIDEVMVRAAKNAKREEKFDLGFFKFISLAGHILESSCKHSEDQEDPSCLKCKYDRELKLEERPEMVFARNSLTIQFGRLGSIEFNALDALKMVCADRLPDVKVGASTVWQSARQDRIQQISEHQKPFDWTYTTHYKGTVTGCQVTPTTERIDMERLKRRDEILFSSSITLFEDELADHGIAQLLARVRVMRGYFFVLLRFYMRVDNVLLRVCDTRIVGNEFDGHVIREWQLREAKYGNLGHVDPEELLDVDRAWMHLPVVEEHFDRVSVDRERLF.

Belongs to the TIP41 family.

This chain is TIP41-like protein, found in Caenorhabditis elegans.